The primary structure comprises 803 residues: MMSVRAINGCSIIRTATSAGGPPVSLFRHRIQRLRASHLREFSKLRLNFPLIRADRRFLGNSDAPSCSTCIHSLVESVSEELESISRRKGSRMRVRASVKVKLTSYGEVLEDKLVNQELEAGLLLEFKKDADRVLLAVLHRRDGKKNWMVFDQNGVSCSIKPQQITYIVPNVYNFDHTGLTDFLQRAQDNLDPQLLEFAWMELLEKNKPVTPEELAEMIYGRADPLESYCAHFLLSQDEIYFSILESKGSRSIYSPRPTEQVEELLRRQRVKEAEDKEFQEFIQLLKSAKKAPSHAKPPKSSWLADDKVQDRIGSLEAYAIDAWASTDQQKLAGTILKSMGLQKTSVSALNLLIDIGYFPVHVNLELLKLNLPTHHSEAITEAAEALLSESSDIDAVRRIDLTHLKVYAIDVDEADELDDALSATRLQDGRIKIWIHVADPARYVTPGSKVDREARRRGTSVFLPTATYPMFPEKLAMEGMSLRQGENCNAVSVSVVLRSDGCITEYSVDNSIIRPTYMLTYESASELLHLNLEEEAELKLLSEAAFIRSQWRREQGAVDTTTLETRIKVVNPEDPEPLINLYVENQADLAMRLVFEMMILCGEVVATFGSQHNIPLPYRGQPQSNIDVSAFAHLPEGPVRSSSIVKVMRAAEMNFRCPVRHGVLGIPGYVQFTSPIRRYMDLTAHYQIKAFLRGGDNFPFSAGELEGIAASVNMQSKVVRKLSNTGLRYWVIEFLRRQEKGKKYTALVLRFVKDRIASLLLVEVGFQATAWVSEGKQVGDEIEVRVEEAHPRDDLILFKEVI.

The N-terminal 35 residues, 1-35 (MMSVRAINGCSIIRTATSAGGPPVSLFRHRIQRLR), are a transit peptide targeting the chloroplast and mitochondrion. The region spanning 399–694 (RIDLTHLKVY…AHYQIKAFLR (296 aa)) is the RNB domain.

Belongs to the RNR ribonuclease family. Expressed in seedlings, roots, leaves and flowers.

It is found in the mitochondrion. The protein localises to the plastid. It localises to the chloroplast. The enzyme catalyses Exonucleolytic cleavage in the 3'- to 5'-direction to yield nucleoside 5'-phosphates.. Functionally, 3'-5' exoribonuclease that catalyzes 3' maturation of chloroplast and mitochondrion ribosomal RNAs; degrades short nucleotidic extensions to generate the mature 3'-ends. Involved in the maturation of 23S, 16S and 5S rRNAs. The polypeptide is Ribonuclease II, chloroplastic/mitochondrial (RNR1) (Arabidopsis thaliana (Mouse-ear cress)).